Reading from the N-terminus, the 215-residue chain is Cytochrome b6 (215 aa).

Residues 32–52 (IFYCLGGITLTCFLVQVATGF) form a helical membrane-spanning segment. Heme c is bound at residue Cys-35. Heme b contacts are provided by His-86 and His-100. Transmembrane regions (helical) follow at residues 90-110 (ASMM…TGGF), 116-136 (LTWV…VTGY), and 186-206 (LHTF…FLMI). Heme b contacts are provided by His-187 and His-202.

It belongs to the cytochrome b family. PetB subfamily. As to quaternary structure, the 4 large subunits of the cytochrome b6-f complex are cytochrome b6, subunit IV (17 kDa polypeptide, PetD), cytochrome f and the Rieske protein, while the 4 small subunits are PetG, PetL, PetM and PetN. The complex functions as a dimer. Requires heme b as cofactor. The cofactor is heme c.

It localises to the plastid. The protein resides in the chloroplast thylakoid membrane. Component of the cytochrome b6-f complex, which mediates electron transfer between photosystem II (PSII) and photosystem I (PSI), cyclic electron flow around PSI, and state transitions. The chain is Cytochrome b6 from Welwitschia mirabilis (Tree tumbo).